The primary structure comprises 207 residues: Cytochrome c biogenesis ATP-binding export protein CcmA (207 aa).

In terms of domain architecture, ABC transporter spans leucine 4–alanine 207. Glycine 36–threonine 43 contributes to the ATP binding site.

The protein belongs to the ABC transporter superfamily. CcmA exporter (TC 3.A.1.107) family. As to quaternary structure, the complex is composed of two ATP-binding proteins (CcmA) and two transmembrane proteins (CcmB).

Its subcellular location is the cell inner membrane. The enzyme catalyses heme b(in) + ATP + H2O = heme b(out) + ADP + phosphate + H(+). Functionally, part of the ABC transporter complex CcmAB involved in the biogenesis of c-type cytochromes; once thought to export heme, this seems not to be the case, but its exact role is uncertain. Responsible for energy coupling to the transport system. The protein is Cytochrome c biogenesis ATP-binding export protein CcmA of Shigella boydii serotype 4 (strain Sb227).